Here is a 569-residue protein sequence, read N- to C-terminus: Arylsulfatase I (569 aa).

An N-terminal signal peptide occupies residues 1-23; it reads MHTLTGFSLVSLLSFGYLSWDWA. Ca(2+) is bound by residues Asp55, Asp56, and Cys93. The active-site Nucleophile is Cys93. Cys93 carries the 3-oxoalanine (Cys) modification. Lys147 contacts substrate. His149 is an active-site residue. A substrate-binding site is contributed by His239. 2 N-linked (GlcNAc...) asparagine glycosylation sites follow: Asn276 and Asn288. Residues Asp297 and Asn298 each contribute to the Ca(2+) site. A substrate-binding site is contributed by Lys315. N-linked (GlcNAc...) asparagine glycans are attached at residues Asn466 and Asn496. A disordered region spans residues 510 to 539; the sequence is RAHPDFNGGAWGPWASDEEEEEEEGRARSF.

This sequence belongs to the sulfatase family. Ca(2+) is required as a cofactor. In terms of processing, the oxidation of Cys-93 residue to 3-oxoalanine (also known as C(alpha)-formylglycine) by SUMF1/Sulfatase-modifying factor 1, seems critical for catalytic activity. As to expression, expressed in placenta, in embryonic stem cells, fetal eyes and lens.

The protein localises to the secreted. Its subcellular location is the endoplasmic reticulum. In terms of biological role, displays arylsulfatase activity at neutral pH, when co-expressed with SUMF1; arylsulfatase activity is measured in the secretion medium of retinal cell line, but no activity is recorded when measured in cell extracts. Lacks arylsulfatase activity. In Homo sapiens (Human), this protein is Arylsulfatase I (ARSI).